A 393-amino-acid chain; its full sequence is S-adenosylmethionine synthase (393 aa).

Mg(2+) is bound at residue glutamate 9. Residue histidine 15 coordinates ATP. Glutamate 43 provides a ligand contact to K(+). Glutamate 56 and glutamine 99 together coordinate L-methionine. Residues 167–169 (HGK), 235–238 (SGRF), aspartate 246, 252–253 (RK), alanine 269, lysine 273, and lysine 277 each bind ATP. Aspartate 246 provides a ligand contact to L-methionine. L-methionine is bound at residue lysine 277.

This sequence belongs to the AdoMet synthase family. As to quaternary structure, homotetramer. Requires Mn(2+) as cofactor. It depends on Mg(2+) as a cofactor. The cofactor is Co(2+). K(+) is required as a cofactor. As to expression, root.

It is found in the cytoplasm. The catalysed reaction is L-methionine + ATP + H2O = S-adenosyl-L-methionine + phosphate + diphosphate. The protein operates within amino-acid biosynthesis; S-adenosyl-L-methionine biosynthesis; S-adenosyl-L-methionine from L-methionine: step 1/1. Functionally, catalyzes the formation of S-adenosylmethionine from methionine and ATP. The reaction comprises two steps that are both catalyzed by the same enzyme: formation of S-adenosylmethionine (AdoMet) and triphosphate, and subsequent hydrolysis of the triphosphate. The chain is S-adenosylmethionine synthase (METK) from Pinus banksiana (Jack pine).